We begin with the raw amino-acid sequence, 347 residues long: Dual specificity mitogen-activated protein kinase kinase 3 (347 aa).

N-acetylmethionine is present on M1. Low complexity predominate over residues 1 to 15; the sequence is MESPASSQPASMPQS. The disordered stretch occupies residues 1–46; that stretch reads MESPASSQPASMPQSKGKSKRKKDLRISCMSKPPAPNPTPPRNLDS. A phosphoserine mark is found at S3 and S15. One can recognise a Protein kinase domain in the interval 64 to 325; the sequence is LVTISELGRG…YLELMEHPFF (262 aa). ATP contacts are provided by residues 70-78 and K93; that span reads LGRGAYGVV. Residue D190 is the Proton acceptor of the active site. Position 218 is a phosphoserine (S218). Phosphothreonine is present on T222.

Belongs to the protein kinase superfamily. STE Ser/Thr protein kinase family. MAP kinase kinase subfamily. As to quaternary structure, component of a signaling complex containing at least AKAP13, PKN1, MAPK14, ZAK and MAP2K3. Within this complex, AKAP13 interacts directly with PKN1, which in turn recruits MAPK14, MAP2K3 and ZAK. Binds to DYRK1B/MIRK and increases its kinase activity. Part of a complex with MAP3K3, RAC1 and CCM2. Interacts with ARRB1. In terms of assembly, (Microbial infection) Interacts with Yersinia YopJ. Autophosphorylated. Phosphorylation on Ser-218 and Thr-222 by MAP kinase kinase kinases positively regulates the kinase activity. Phosphorylated by TAOK2. In terms of processing, (Microbial infection) Yersinia YopJ may acetylate Ser/Thr residues, preventing phosphorylation and activation, thus blocking the MAPK signaling pathway. Abundant expression is seen in the skeletal muscle. It is also widely expressed in other tissues.

It catalyses the reaction L-seryl-[protein] + ATP = O-phospho-L-seryl-[protein] + ADP + H(+). It carries out the reaction L-threonyl-[protein] + ATP = O-phospho-L-threonyl-[protein] + ADP + H(+). The enzyme catalyses L-tyrosyl-[protein] + ATP = O-phospho-L-tyrosyl-[protein] + ADP + H(+). Its activity is regulated as follows. Activated by dual phosphorylation on Ser-218 and Thr-222. Functionally, dual specificity kinase. Is activated by cytokines and environmental stress in vivo. Catalyzes the concomitant phosphorylation of a threonine and a tyrosine residue in the MAP kinase p38. Part of a signaling cascade that begins with the activation of the adrenergic receptor ADRA1B and leads to the activation of MAPK14. The chain is Dual specificity mitogen-activated protein kinase kinase 3 (MAP2K3) from Homo sapiens (Human).